The chain runs to 582 residues: Kelch-like protein diablo (582 aa).

The tract at residues 1-22 is disordered; that stretch reads MGDVLISDRPPSPARLSHTSEK. Residues 41–108 form the BTB domain; sequence CDVVINVSGR…CYTSHIVVEE (68 aa). A BACK domain is found at 143–245; that stretch reads CLGIRAFADT…SPKFLVGTVG (103 aa). 6 Kelch repeats span residues 292 to 338, 340 to 386, 387 to 433, 435 to 480, 482 to 527, and 528 to 574; these read VLFA…VLND, LYAV…VLDG, FLYA…VLGG, LYAI…VFNN, IYAV…VVNG, and QLYA…VMRA.

It functions in the pathway protein modification; protein ubiquitination. Functionally, probable substrate-specific adapter of an E3 ubiquitin-protein ligase complex which mediates the ubiquitination and subsequent proteasomal degradation of target proteins. May have a role in synapse differentiation and growth. In Culex quinquefasciatus (Southern house mosquito), this protein is Kelch-like protein diablo.